Here is a 420-residue protein sequence, read N- to C-terminus: Vacuolar amino acid transporter 5 (420 aa).

Residues 1-19 (MSGYSPLSSGPADVHIGKA) are Cytoplasmic-facing. A helical membrane pass occupies residues 20-40 (GFFSSVINLANTILGAGILSL). At 41–49 (PNAFTKTGL) the chain is on the vacuolar side. A helical membrane pass occupies residues 50–70 (LFGCLTIVFSAFASFLGLYFV). Residues 71-96 (SQCAARLPRGKASFAAVAKHTFPSLA) lie on the Cytoplasmic side of the membrane. The chain crosses the membrane as a helical span at residues 97-117 (VVFDASIAVKCFGVAVSYLVI). At 118–141 (VGDLMPQIAPSLGLSSPMFLRRQT) the chain is on the vacuolar side. The helical transmembrane segment at 142 to 162 (WIVFALFVLTPLSFLKRLDSL) threads the bilayer. Residues 163 to 166 (RHTS) lie on the Cytoplasmic side of the membrane. Residues 167 to 187 (VISLIALCYLVFIVLYHFIIG) form a helical membrane-spanning segment. Topologically, residues 188–195 (DTVKGEIR) are vacuolar. The chain crosses the membrane as a helical span at residues 196–216 (YFVPESGFGYLSVLPVFVFGF). The Cytoplasmic portion of the chain corresponds to 217 to 240 (TCHQNAFSVINEVRNFSQGFVNFT). Residues 241–261 (MFTAIISSTLLYLLVAITGYL) traverse the membrane as a helical segment. At 262 to 278 (SFGSLASGNIIAMYDNT) the chain is on the vacuolar side. Residues 279–299 (SIWIIGGKLAIVVLVLFSYPL) traverse the membrane as a helical segment. Residues 300–326 (QCHPCRNSVYQAIRRSYSAHDMSDGYH) are Cytoplasmic-facing. A helical membrane pass occupies residues 327 to 347 (AVITLCILLFTHSLALLLSSL). Residues 348–349 (EM) are Vacuolar-facing. Residues 350–370 (VLAFVGSTGSTFISFILPGSL) traverse the membrane as a helical segment. The Cytoplasmic segment spans residues 371–394 (YYFFSHKVASPGNSSPLQLRISRA). A helical transmembrane segment spans residues 395–415 (FAAGLAIYGTVVMILCLNINI). The Vacuolar segment spans residues 416 to 420 (AKLSH).

Belongs to the amino acid/polyamine transporter 2 family.

It is found in the vacuole membrane. Vacuolar amino acid transporter involved in the vacuolar uptake of histidine, glutamate, tyrosine, arginine, lysine, and serine. Required for sporulation. This is Vacuolar amino acid transporter 5 (avt5) from Schizosaccharomyces pombe (strain 972 / ATCC 24843) (Fission yeast).